The sequence spans 203 residues: Histidine biosynthesis bifunctional protein HisIE (203 aa).

The tract at residues 1-114 (MLTEQQRREL…FGNTAHQWLF (114 aa)) is phosphoribosyl-AMP cyclohydrolase. A phosphoribosyl-ATP pyrophosphohydrolase region spans residues 115-203 (LYQLEQLLAE…VIENLHKRHQ (89 aa)).

In the N-terminal section; belongs to the PRA-CH family. The protein in the C-terminal section; belongs to the PRA-PH family.

The protein resides in the cytoplasm. It carries out the reaction 1-(5-phospho-beta-D-ribosyl)-ATP + H2O = 1-(5-phospho-beta-D-ribosyl)-5'-AMP + diphosphate + H(+). It catalyses the reaction 1-(5-phospho-beta-D-ribosyl)-5'-AMP + H2O = 1-(5-phospho-beta-D-ribosyl)-5-[(5-phospho-beta-D-ribosylamino)methylideneamino]imidazole-4-carboxamide. The protein operates within amino-acid biosynthesis; L-histidine biosynthesis; L-histidine from 5-phospho-alpha-D-ribose 1-diphosphate: step 2/9. It participates in amino-acid biosynthesis; L-histidine biosynthesis; L-histidine from 5-phospho-alpha-D-ribose 1-diphosphate: step 3/9. This Shigella flexneri protein is Histidine biosynthesis bifunctional protein HisIE (hisI).